Here is a 392-residue protein sequence, read N- to C-terminus: HORMA domain-containing protein 1 (392 aa).

An HORMA domain is found at 25–227 (QQSLMFVKRL…TPFHTFRLKV (203 aa)). Disordered regions lie at residues 271-292 (IKTK…EPNL) and 371-392 (LESS…NEHT). Residue S374 is modified to Phosphoserine. Positions 381–384 (KRRR) match the Nuclear localization signal motif.

Interacts with HORMAD2. Interacts with IHO1. Post-translationally, phosphorylated at Ser-375 in a SPO11-dependent manner.

It localises to the nucleus. The protein resides in the chromosome. In terms of biological role, plays a key role in meiotic progression. Regulates 3 different functions during meiosis: ensures that sufficient numbers of processed DNA double-strand breaks (DSBs) are available for successful homology search by increasing the steady-state numbers of single-stranded DSB ends. Promotes synaptonemal-complex formation independently of its role in homology search. Plays a key role in the male mid-pachytene checkpoint and the female meiotic prophase checkpoint: required for efficient build-up of ATR activity on unsynapsed chromosome regions, a process believed to form the basis of meiotic silencing of unsynapsed chromatin (MSUC) and meiotic prophase quality control in both sexes. The chain is HORMA domain-containing protein 1 (Hormad1) from Rattus norvegicus (Rat).